The following is a 353-amino-acid chain: B1 bradykinin receptor (353 aa).

The Extracellular segment spans residues Met1–Thr41. Asn13 and Asn21 each carry an N-linked (GlcNAc...) asparagine glycan. The helical transmembrane segment at Cys42 to Leu62 threads the bilayer. Topologically, residues Val63 to Glu72 are cytoplasmic. A helical transmembrane segment spans residues Ile73–Ala93. Residues Glu94–Arg110 are Extracellular-facing. Cysteines 109 and 189 form a disulfide. A helical transmembrane segment spans residues Val111–Ser131. The Cytoplasmic portion of the chain corresponds to Arg132–Ala154. Residues Gln155 to Leu175 form a helical membrane-spanning segment. At Arg176–Asn207 the chain is on the extracellular side. An N-linked (GlcNAc...) asparagine glycan is attached at Asn185. The chain crosses the membrane as a helical span at residues Val208 to Ala228. Residues Leu229–Leu251 lie on the Cytoplasmic side of the membrane. A helical membrane pass occupies residues Ile252–Leu272. Over Glu273–Gln295 the chain is Extracellular. The chain crosses the membrane as a helical span at residues Tyr296–Gly316. The Cytoplasmic portion of the chain corresponds to Gln317–Asn353. Residue Cys330 is the site of S-palmitoyl cysteine attachment.

It belongs to the G-protein coupled receptor 1 family. Bradykinin receptor subfamily. BDKRB1 sub-subfamily.

Its subcellular location is the cell membrane. This is a receptor for bradykinin. Could be a factor in chronic pain and inflammation. The sequence is that of B1 bradykinin receptor (BDKRB1) from Sus scrofa (Pig).